Here is a 374-residue protein sequence, read N- to C-terminus: Low-specificity L-threonine aldolase (374 aa).

An N6-(pyridoxal phosphate)lysine modification is found at K213. The tract at residues 354-374 (HPHKDDGRNNKKMYSLDAIKK) is disordered.

This sequence belongs to the threonine aldolase family. As to quaternary structure, homotetramer. Pyridoxal 5'-phosphate serves as cofactor.

It catalyses the reaction L-threonine = acetaldehyde + glycine. The enzyme catalyses L-allo-threonine = acetaldehyde + glycine. It participates in amino-acid degradation; L-threonine degradation via aldolase pathway; acetaldehyde and glycine from L-threonine: step 1/1. This Candida albicans (Yeast) protein is Low-specificity L-threonine aldolase (GLY1).